The following is an 82-amino-acid chain: Putative membrane protein insertion efficiency factor (82 aa).

The protein belongs to the UPF0161 family.

The protein resides in the cell inner membrane. In terms of biological role, could be involved in insertion of integral membrane proteins into the membrane. The protein is Putative membrane protein insertion efficiency factor of Rickettsia felis (strain ATCC VR-1525 / URRWXCal2) (Rickettsia azadi).